The primary structure comprises 494 residues: Apolipoprotein N-acyltransferase (494 aa).

Helical transmembrane passes span 16–36, 41–61, 62–82, 133–153, 173–193, and 202–222; these read TVGG…FIWI, LWAS…AILL, SYRW…IAFS, LIWG…FGLG, GGLA…IFAF, and LFAL…ILLA. One can recognise a CN hydrolase domain in the interval 235-461; sequence WQTNIPTRQK…EGVGVIDINV (227 aa). Glu276 acts as the Proton acceptor in catalysis. The active site involves Lys325. The active-site Nucleophile is Cys373. The chain crosses the membrane as a helical span at residues 468–488; that stretch reads YVRWGEIPLISSLLIVLCFIA.

The protein belongs to the CN hydrolase family. Apolipoprotein N-acyltransferase subfamily.

It is found in the cell inner membrane. It catalyses the reaction N-terminal S-1,2-diacyl-sn-glyceryl-L-cysteinyl-[lipoprotein] + a glycerophospholipid = N-acyl-S-1,2-diacyl-sn-glyceryl-L-cysteinyl-[lipoprotein] + a 2-acyl-sn-glycero-3-phospholipid + H(+). It functions in the pathway protein modification; lipoprotein biosynthesis (N-acyl transfer). In terms of biological role, catalyzes the phospholipid dependent N-acylation of the N-terminal cysteine of apolipoprotein, the last step in lipoprotein maturation. This Prochlorococcus marinus (strain SARG / CCMP1375 / SS120) protein is Apolipoprotein N-acyltransferase.